We begin with the raw amino-acid sequence, 31 residues long: Cyclotide psybry C (31 aa).

The segment at residues 1 to 31 (GFNPCGETCQIDQTCHAPGCTCSIANICVRN) is a cross-link (cyclopeptide (Gly-Asn)). 3 disulfides stabilise this stretch: C5/C20, C9/C22, and C15/C28.

In terms of processing, this is a cyclic peptide.

In terms of biological role, probably participates in a plant defense mechanism. In Psychotria brachyceras, this protein is Cyclotide psybry C.